Reading from the N-terminus, the 125-residue chain is Phosphoribosyl-AMP cyclohydrolase (125 aa).

Aspartate 86 contacts Mg(2+). A Zn(2+)-binding site is contributed by cysteine 87. Residues aspartate 88 and aspartate 90 each contribute to the Mg(2+) site. Residues cysteine 103 and cysteine 110 each coordinate Zn(2+).

This sequence belongs to the PRA-CH family. In terms of assembly, homodimer. Mg(2+) serves as cofactor. The cofactor is Zn(2+).

It is found in the cytoplasm. The catalysed reaction is 1-(5-phospho-beta-D-ribosyl)-5'-AMP + H2O = 1-(5-phospho-beta-D-ribosyl)-5-[(5-phospho-beta-D-ribosylamino)methylideneamino]imidazole-4-carboxamide. It functions in the pathway amino-acid biosynthesis; L-histidine biosynthesis; L-histidine from 5-phospho-alpha-D-ribose 1-diphosphate: step 3/9. In terms of biological role, catalyzes the hydrolysis of the adenine ring of phosphoribosyl-AMP. This is Phosphoribosyl-AMP cyclohydrolase from Erythrobacter litoralis (strain HTCC2594).